A 1723-amino-acid chain; its full sequence is Lys-gingipain HG66 (1723 aa).

Positions 1-24 (MRKLLLLIAASLLGVGLYAQNAKI) are cleaved as a signal peptide. The propeptide occupies 25–228 (KLDAPTTRTT…ETAYKQLFNR (204 aa)). Residues Asp-313, Asp-337, Asp-339, Phe-341, and Glu-343 each coordinate Ca(2+). Residue His-444 is the Proton donor of the active site. Residue Cys-477 is the Nucleophile of the active site. Residues Phe-482 and Glu-491 each coordinate Ca(2+). Residues 965 to 985 (DAPNGTPNPNPNPNPGTTTLS) are disordered. The Ca(2+) site is built by Ser-987, Glu-989, Asp-1000, Asp-1002, Asp-1004, His-1006, Ser-1021, Gly-1023, Asn-1042, Asp-1145, and Glu-1146.

This sequence belongs to the peptidase C25 family. In terms of processing, proteolytically cleaved into a catalytic subunit and three adhesins. Arg-gingipain is involved in this post-translational processing.

The protein localises to the secreted. The enzyme catalyses Endopeptidase with strict specificity for lysyl bonds.. In terms of biological role, cysteine proteinase with a strong preference for substrates with Lys in the P1 position. Hydrolyzes bovine hemoglobin, bovine serum albumin, casein, human placental type I collagen and human IgA and IgG. Disrupts the functions of polymorphonuclear leukocytes. May act as a virulence factor in the development of peridontal disease. Involved in the coaggregation of P.gingivalis with other oral bacteria. The chain is Lys-gingipain HG66 from Porphyromonas gingivalis (Bacteroides gingivalis).